Here is a 909-residue protein sequence, read N- to C-terminus: Epithelial discoidin domain-containing receptor 1 (909 aa).

Positions 1–18 (MGPEALSSLLLLLLVASG) are cleaved as a signal peptide. The Extracellular segment spans residues 21–413 (DMKGHFDPAK…VAKAEGSPTA (393 aa)). Residues 31–181 (CRYALGMQDR…VCLRVELYGC (151 aa)) enclose the F5/8 type C domain. 2 disulfides stabilise this stretch: Cys31-Cys181 and Cys70-Cys173. Residues 45–60 (SDISASSSWSDSTAAR) are compositionally biased toward low complexity. A disordered region spans residues 45-65 (SDISASSSWSDSTAARHSSDG). The interval 188 to 363 (LSYTAPVGQT…LFSEISFISD (176 aa)) is DS-like domain. Residues Asn207, Gln226, Asp229, Val231, Tyr249, and Tyr251 each contribute to the Ca(2+) site. Asn207 carries N-linked (GlcNAc...) asparagine glycosylation. Asn256 carries an N-linked (GlcNAc...) asparagine glycan. Residues Cys299 and Cys344 are joined by a disulfide bond. Positions 356 and 357 each coordinate Ca(2+). N-linked (GlcNAc...) asparagine glycosylation is found at Asn366 and Asn390. Residues 414–434 (ILIGCLVAIILLLLLIIALML) form a helical membrane-spanning segment. The Cytoplasmic segment spans residues 435–909 (WRLHWRRLLS…FLAEDALNTV (475 aa)). The interval 466–495 (ILINNRPGPREPPPYQEPRPRGNPPHSAPC) is disordered. A compositionally biased stretch (pro residues) spans 475–492 (REPPPYQEPRPRGNPPHS). A PPxY motif motif is present at residues 477 to 480 (PPPY). Phosphotyrosine; by autocatalysis occurs at positions 480, 509, and 516. Residues 606–901 (LRFKEKLGEG…PPFSQLHRFL (296 aa)) enclose the Protein kinase domain. ATP is bound at residue 612–620 (LGEGQFGEV). Position 627 is a phosphoserine (Ser627). Residue Lys651 participates in ATP binding. Phosphotyrosine; by autocatalysis is present on Tyr736. The active-site Proton acceptor is the Asp762. Phosphotyrosine; by autocatalysis is present on residues Tyr788, Tyr792, and Tyr793.

This sequence belongs to the protein kinase superfamily. Tyr protein kinase family. Insulin receptor subfamily. Homodimer. Interacts (via PPxY motif) with WWC1 (via WW domains) in a collagen-regulated manner. Forms a tripartite complex with WWC1 and PRKCZ, but predominantly in the absence of collagen. Interacts (tyrosine phosphorylated) with SHC1. Interacts with SRC. Interacts with MYH9. Interacts with CDH1. Interacts with PTPN11. Interacts with NCK2. Post-translationally, autophosphorylated in response to fibrillar collagen binding.

It is found in the cell membrane. The catalysed reaction is L-tyrosyl-[protein] + ATP = O-phospho-L-tyrosyl-[protein] + ADP + H(+). Its function is as follows. Tyrosine kinase that functions as a cell surface receptor for fibrillar collagen and regulates cell attachment to the extracellular matrix, remodeling of the extracellular matrix, cell migration, differentiation, survival and cell proliferation. Collagen binding triggers a signaling pathway that involves SRC and leads to the activation of MAP kinases. Regulates remodeling of the extracellular matrix by up-regulation of the matrix metalloproteinases MMP2, MMP7 and MMP9, and thereby facilitates cell migration and wound healing. Promotes smooth muscle cell migration, and thereby contributes to arterial wound healing. Also plays a role in tumor cell invasion. Phosphorylates PTPN11. Required for normal blastocyst implantation during pregnancy, for normal mammary gland differentiation and normal lactation. Required for normal ear morphology and normal hearing. In Pan troglodytes (Chimpanzee), this protein is Epithelial discoidin domain-containing receptor 1 (DDR1).